The sequence spans 80 residues: Exodeoxyribonuclease 7 small subunit (80 aa).

The protein belongs to the XseB family. As to quaternary structure, heterooligomer composed of large and small subunits.

It localises to the cytoplasm. The enzyme catalyses Exonucleolytic cleavage in either 5'- to 3'- or 3'- to 5'-direction to yield nucleoside 5'-phosphates.. Its function is as follows. Bidirectionally degrades single-stranded DNA into large acid-insoluble oligonucleotides, which are then degraded further into small acid-soluble oligonucleotides. In Erwinia tasmaniensis (strain DSM 17950 / CFBP 7177 / CIP 109463 / NCPPB 4357 / Et1/99), this protein is Exodeoxyribonuclease 7 small subunit.